Consider the following 362-residue polypeptide: GMP reductase (362 aa).

NADP(+)-binding positions include 26 to 27, Lys78, 129 to 131, and 180 to 181; these read SR, DVA, and IG. Gly181, Gly183, and Cys186 together coordinate K(+). Cys186 acts as the Thioimidate intermediate in catalysis. The active-site Proton donor/acceptor is the Thr188. Residue Arg189 participates in K(+) binding. Residues 219–221, 242–243, 268–270, and 286–290 contribute to the GMP site; these read DGG, GG, GMS, and RASEG. Residues Met269, 285–286, and 314–317 contribute to the NADP(+) site; these read YR and STCT.

It belongs to the IMPDH/GMPR family.

It catalyses the reaction IMP + NH4(+) + NADP(+) = GMP + NADPH + 2 H(+). Its function is as follows. Catalyzes the irreversible NADPH-dependent deamination of GMP to IMP. It functions in the conversion of nucleobase, nucleoside and nucleotide derivatives of G to A nucleotides, and in maintaining the intracellular balance of A and G nucleotides. The sequence is that of GMP reductase from Phytophthora infestans (Potato late blight agent).